Reading from the N-terminus, the 246-residue chain is Ribonuclease 3 (246 aa).

The region spanning 18-147 is the RNase III domain; that stretch reads FQELQNKIGI…FIGALYLDQG (130 aa). Position 60 (Glu60) interacts with Mg(2+). The active site involves Asp64. 2 residues coordinate Mg(2+): Asp133 and Glu136. Glu136 is a catalytic residue. One can recognise a DRBM domain in the interval 173–242; that stretch reads DFKSQLQELV…AQMALETLRA (70 aa).

It belongs to the ribonuclease III family. Homodimer. Requires Mg(2+) as cofactor.

It localises to the cytoplasm. It carries out the reaction Endonucleolytic cleavage to 5'-phosphomonoester.. Functionally, digests double-stranded RNA. Involved in the processing of primary rRNA transcript to yield the immediate precursors to the large and small rRNAs (23S and 16S). Processes some mRNAs, and tRNAs when they are encoded in the rRNA operon. Processes pre-crRNA and tracrRNA of type II CRISPR loci if present in the organism. The protein is Ribonuclease 3 of Geobacillus kaustophilus (strain HTA426).